The following is a 208-amino-acid chain: Thymidylate kinase (208 aa).

10-17 serves as a coordination point for ATP; that stretch reads GLEGAGKT.

It belongs to the thymidylate kinase family.

It catalyses the reaction dTMP + ATP = dTDP + ADP. Functionally, phosphorylation of dTMP to form dTDP in both de novo and salvage pathways of dTTP synthesis. This chain is Thymidylate kinase, found in Actinobacillus pleuropneumoniae serotype 5b (strain L20).